The chain runs to 353 residues: Histidinol-phosphate aminotransferase (353 aa).

K211 carries the post-translational modification N6-(pyridoxal phosphate)lysine.

The protein belongs to the class-II pyridoxal-phosphate-dependent aminotransferase family. Histidinol-phosphate aminotransferase subfamily. In terms of assembly, homodimer. The cofactor is pyridoxal 5'-phosphate.

It carries out the reaction L-histidinol phosphate + 2-oxoglutarate = 3-(imidazol-4-yl)-2-oxopropyl phosphate + L-glutamate. It participates in amino-acid biosynthesis; L-histidine biosynthesis; L-histidine from 5-phospho-alpha-D-ribose 1-diphosphate: step 7/9. The sequence is that of Histidinol-phosphate aminotransferase from Klebsiella pneumoniae subsp. pneumoniae (strain ATCC 700721 / MGH 78578).